We begin with the raw amino-acid sequence, 153 residues long: Transcriptional repressor NrdR (153 aa).

Residues 3 to 34 (CPFCGHLEDRVIDSRAGGAGEVIRRRRECASC) fold into a zinc finger. One can recognise an ATP-cone domain in the interval 49-139 (PTVVKKDGRR…VYRSFRDIDQ (91 aa)).

Belongs to the NrdR family. Zn(2+) serves as cofactor.

Functionally, negatively regulates transcription of bacterial ribonucleotide reductase nrd genes and operons by binding to NrdR-boxes. This is Transcriptional repressor NrdR from Sorangium cellulosum (strain So ce56) (Polyangium cellulosum (strain So ce56)).